The chain runs to 235 residues: MDARERLIVGLDVPTIGEAEKLVSTLGDDILFYKIGYQLVFAGGLEFARDLAASGKKIFLDMKLLDIDNTVASGVENIARMGMSMLTLHAYPKAMRAAVEAAAGSGLCLLGVTVLTSMDAEDLAEAGYNQDPHSLVLRRAEQARAAGMGGIVCSAAEAAEVREVLGPDMAIVTPGIRPTGSDHGDQKRVMTPFDALKAGATHLVVARPIVKAPDPRHAARAVLNEMVAARWPANR.

Residues aspartate 12, lysine 34, 61–70 (DMKLLDIDNT), threonine 116, arginine 177, glutamine 186, and arginine 207 contribute to the substrate site. The Proton donor role is filled by lysine 63.

The protein belongs to the OMP decarboxylase family. Type 1 subfamily. Homodimer.

It carries out the reaction orotidine 5'-phosphate + H(+) = UMP + CO2. It participates in pyrimidine metabolism; UMP biosynthesis via de novo pathway; UMP from orotate: step 2/2. Its function is as follows. Catalyzes the decarboxylation of orotidine 5'-monophosphate (OMP) to uridine 5'-monophosphate (UMP). This is Orotidine 5'-phosphate decarboxylase from Rhizobium etli (strain CIAT 652).